The chain runs to 285 residues: MAIYLVGDIQGCFNELSSLLLQVNFDRNNDVLYLAGDLVARGPNSLETLRFVKSLGESAKVVLGNHDLHLLSVHAGIKKAKKSDNLSALLAAPDVNELMDWLAAQPLLQEIPNTCSNSNAINQANNNSAYMSHAGISPQWQLSVALEQAKFIQTKLASSDRNTWLALMYGEKPNDWHQAITEIERFRYSINAFTRMRFCFTDGTLEFEQKDSPENITLTNIVPWYELSQTINNTSWVFGHWASLMGKSSHPNIYPLDTGCVWGNQLTMLRWHDKKYFIQSSELSD.

This sequence belongs to the Ap4A hydrolase family.

The enzyme catalyses P(1),P(4)-bis(5'-adenosyl) tetraphosphate + H2O = 2 ADP + 2 H(+). Hydrolyzes diadenosine 5',5'''-P1,P4-tetraphosphate to yield ADP. The polypeptide is Bis(5'-nucleosyl)-tetraphosphatase, symmetrical (Colwellia psychrerythraea (strain 34H / ATCC BAA-681) (Vibrio psychroerythus)).